We begin with the raw amino-acid sequence, 159 residues long: H/ACA ribonucleoprotein complex subunit 2-like protein (159 aa).

The disordered stretch occupies residues 1–28 (MAKTPKKDKTEEKEEHEESGGNKEDRER).

This sequence belongs to the eukaryotic ribosomal protein eL8 family. In terms of assembly, component of the small nucleolar ribonucleoprotein particle containing H/ACA-type snoRNAs (H/ACA snoRNPs). Component of the telomerase holoenzyme complex.

The protein resides in the nucleus. The protein localises to the nucleolus. Its function is as follows. Required for ribosome biogenesis. Part of a complex which catalyzes pseudouridylation of rRNA. This involves the isomerization of uridine such that the ribose is subsequently attached to C5, instead of the normal N1. Pseudouridine ('psi') residues may serve to stabilize the conformation of rRNAs. The protein is H/ACA ribonucleoprotein complex subunit 2-like protein of Branchiostoma belcheri (Amphioxus).